The chain runs to 742 residues: MATKFPAFNQGLAQDPTTRRIWYGIATAHDFESHDGMTEEKLYQKLFSTHFGHLAIIALWVAGNLFHIAWQGNFEQFVLDPTHVRPIAHAIWDPHFGSGITEAMTQAGADGPVNIAYSGLYHWWYTIGMRTNEQLFQASIFMSILACWTLFAGWLHLQPKFRPSLAWFKNNESRLNHHLAVLFGFSSIAWTGHLVHVAIPESRGIHVGWDNWLTVLPHPAGLTPFFTLNWGAYAQNPDSLEQVFGTAEGAGTAIFTFLGGLHPQSEALWLTDIAHHHIAIGTVFIIAGHMYRNTFGIGHSLKEITEAHNTRHPLDPHKGSFGINHDGLYETVTNSLHFQLGLALAALGVATSLVAQHMGALPSYAFIARDYTTQSALYTHHQYIAMFLMVGAFAHGAIFFVRDYDPELNKDNVLARVLGTKEALISHLSWVTMILGFHTLGIYVHNDVVVAFGNPEKQILIEPVFAQFVQAAQGKMMYGFNALLSDPTSAASVAANSLPGNHYWMDLINRQDALSAFLPIGPADFLVHHAIALGLHTTALILIKGALDARGTKLIPDKKDLGYAFPCDGPGRGGTCDSSSWDAMYLAMFWALNLIAWVTFYWHWKHLAIWQGNVAQFNESGTYLMGWFRDYLWLNSAQLINGYNPFGVNSLSVWAWMFLFGHLVWATGFMFLISWRGYWQELIETLVWAHQRTPIANLVGWRDKPVALSIVQARLVGLAHFTIGNILTFGAFVIASTSGKFG.

Transmembrane regions (helical) follow at residues 46 to 69 (LFST…FHIA), 135 to 158 (LFQA…LHLQ), 175 to 199 (LNHH…HVAI), 273 to 291 (IAHH…GHMY), 336 to 359 (LHFQ…QHMG), 375 to 401 (SALY…IFFV), 423 to 445 (ALIS…IYVH), and 525 to 543 (FLVH…LILI). [4Fe-4S] cluster is bound by residues C567 and C576. Helical transmembrane passes span 583 to 604 (AMYL…YWHW) and 651 to 673 (LSVW…MFLI). Divinyl chlorophyll a contacts are provided by H662, M670, and Y678. Residue W679 participates in phylloquinone binding. The chain crosses the membrane as a helical span at residues 715-735 (LVGLAHFTIGNILTFGAFVIA).

It belongs to the PsaA/PsaB family. The PsaA/B heterodimer binds the P700 divinyl chlorophyll special pair and subsequent electron acceptors. PSI consists of a core antenna complex that captures photons, and an electron transfer chain that converts photonic excitation into a charge separation. The cyanobacterial PSI reaction center is composed of one copy each of PsaA,B,C,D,E,F,I,J,K,L,M and X, and forms trimeric complexes. PSI electron transfer chain: 5 divinyl chlorophyll a, 1 divinyl chlorophyll a', 2 phylloquinones and 3 4Fe-4S clusters. PSI core antenna: 90 divinyl chlorophyll a, 22 carotenoids, 3 phospholipids and 1 galactolipid. P700 is a divinyl chlorophyll a/divinyl chlorophyll a' dimer, A0 is one or more divinyl chlorophyll a, A1 is one or both phylloquinones and FX is a shared 4Fe-4S iron-sulfur center. is required as a cofactor.

The protein resides in the cellular thylakoid membrane. It carries out the reaction reduced [plastocyanin] + hnu + oxidized [2Fe-2S]-[ferredoxin] = oxidized [plastocyanin] + reduced [2Fe-2S]-[ferredoxin]. Functionally, psaA and PsaB bind P700, the primary electron donor of photosystem I (PSI), as well as the electron acceptors A0, A1 and FX. PSI is a plastocyanin/cytochrome c6-ferredoxin oxidoreductase, converting photonic excitation into a charge separation, which transfers an electron from the donor P700 chlorophyll pair to the spectroscopically characterized acceptors A0, A1, FX, FA and FB in turn. Oxidized P700 is reduced on the lumenal side of the thylakoid membrane by plastocyanin or cytochrome c6. The sequence is that of Photosystem I P700 chlorophyll a apoprotein A2 from Prochlorococcus marinus (strain MIT 9515).